A 1070-amino-acid chain; its full sequence is Carbamoyl phosphate synthase large chain (1070 aa).

The tract at residues 1–399 (MPKREDIKKV…SLLKAFKSLD (399 aa)) is carboxyphosphate synthetic domain. Residues Arg129, Arg169, Gly175, Gly176, Glu208, Val210, Glu215, Gly241, Val242, His243, Gln284, and Glu296 each contribute to the ATP site. Residues 133–325 (KETMLRIGEK…IARVTAKIAI (193 aa)) enclose the ATP-grasp 1 domain. The Mg(2+) site is built by Gln284, Glu296, and Asn298. Gln284, Glu296, and Asn298 together coordinate Mn(2+). The tract at residues 400–540 (IDSQLGNKRW…YSTYEDTCET (141 aa)) is oligomerization domain. Residues 541–931 (NPTDRKKILI…YKAELAADNL (391 aa)) form a carbamoyl phosphate synthetic domain region. Residues 672–863 (YVLMQKFGIL…LAKIAARVIA (192 aa)) form the ATP-grasp 2 domain. ATP is bound by residues Arg708, Asp747, Leu749, Glu754, Gly779, Val780, His781, Ser782, Gln822, and Glu834. Residues Gln822, Glu834, and Asn836 each contribute to the Mg(2+) site. The Mn(2+) site is built by Gln822, Glu834, and Asn836. The region spanning 930-1070 (NLLPLTGKVF…INEYHKEMGL (141 aa)) is the MGS-like domain. Positions 932–1070 (LPLTGKVFLS…INEYHKEMGL (139 aa)) are allosteric domain.

The protein belongs to the CarB family. As to quaternary structure, composed of two chains; the small (or glutamine) chain promotes the hydrolysis of glutamine to ammonia, which is used by the large (or ammonia) chain to synthesize carbamoyl phosphate. Tetramer of heterodimers (alpha,beta)4. Mg(2+) is required as a cofactor. The cofactor is Mn(2+).

The enzyme catalyses hydrogencarbonate + L-glutamine + 2 ATP + H2O = carbamoyl phosphate + L-glutamate + 2 ADP + phosphate + 2 H(+). The catalysed reaction is hydrogencarbonate + NH4(+) + 2 ATP = carbamoyl phosphate + 2 ADP + phosphate + 2 H(+). The protein operates within amino-acid biosynthesis; L-arginine biosynthesis; carbamoyl phosphate from bicarbonate: step 1/1. It participates in pyrimidine metabolism; UMP biosynthesis via de novo pathway; (S)-dihydroorotate from bicarbonate: step 1/3. Its function is as follows. Large subunit of the glutamine-dependent carbamoyl phosphate synthetase (CPSase). CPSase catalyzes the formation of carbamoyl phosphate from the ammonia moiety of glutamine, carbonate, and phosphate donated by ATP, constituting the first step of 2 biosynthetic pathways, one leading to arginine and/or urea and the other to pyrimidine nucleotides. The large subunit (synthetase) binds the substrates ammonia (free or transferred from glutamine from the small subunit), hydrogencarbonate and ATP and carries out an ATP-coupled ligase reaction, activating hydrogencarbonate by forming carboxy phosphate which reacts with ammonia to form carbamoyl phosphate. This chain is Carbamoyl phosphate synthase large chain, found in Methanosarcina acetivorans (strain ATCC 35395 / DSM 2834 / JCM 12185 / C2A).